A 305-amino-acid polypeptide reads, in one-letter code: Probable lipid kinase YegS-like (305 aa).

In terms of domain architecture, DAGKc spans 1–129 (MTQRRAMLIL…VDLGEVGGKL (129 aa)). ATP contacts are provided by residues threonine 39, 65–71 (GDGTLRD), and threonine 92. Leucine 210, aspartate 213, and leucine 215 together coordinate Mg(2+). Residue glutamate 268 is the Proton acceptor of the active site.

It belongs to the diacylglycerol/lipid kinase family. YegS lipid kinase subfamily. The cofactor is Mg(2+). Ca(2+) is required as a cofactor.

The protein resides in the cytoplasm. Probably phosphorylates lipids; the in vivo substrate is unknown. In Pseudomonas syringae pv. tomato (strain ATCC BAA-871 / DC3000), this protein is Probable lipid kinase YegS-like.